The sequence spans 483 residues: Probable glycosyltransferase 6 (483 aa).

Residues 1–40 (MAASETAPFGVSAASKGGGGVAGARAQHGQLAVAGRVHDA) are Cytoplasmic-facing. Residues 41–61 (LVFAAGAVAAVLVLLATASFL) traverse the membrane as a helical; Signal-anchor for type II membrane protein segment. Topologically, residues 62-483 (SPMPVTNLVA…PLPFDYPAAR (422 aa)) are lumenal. An N-linked (GlcNAc...) asparagine glycan is attached at asparagine 144.

Belongs to the glycosyltransferase 34 family.

The protein resides in the golgi apparatus membrane. In terms of biological role, probable glycosyltransferase that may be involved in the biosynthesis of xyloglucan. In Oryza sativa subsp. indica (Rice), this protein is Probable glycosyltransferase 6.